The chain runs to 836 residues: Outer membrane usher protein PapC (836 aa).

The signal sequence occupies residues Met-1–Ala-24. Residues Cys-814 and Cys-832 are joined by a disulfide bond.

The protein belongs to the fimbrial export usher family.

The protein localises to the cell outer membrane. Its function is as follows. Involved in the export and assembly of pili subunits across the outer membrane. Forms a hexameric ring-shaped pore in the outer bacterial membrane. The 2 nanometer-diameter pore allows the passage of the thin tip fibrillum. As for the rod, it probably unwinds into linear fibers which would therefore be narrow enough to pass through the pore. In Escherichia coli, this protein is Outer membrane usher protein PapC (papC).